The following is a 64-amino-acid chain: U-scoloptoxin(14)-Er1a (64 aa).

The first 23 residues, 1–23 (MRPSFPLLLIMLLVCTAHHMVSG), serve as a signal peptide directing secretion.

It belongs to the scoloptoxin-14 family. Post-translationally, contains 4 disulfide bonds. In terms of tissue distribution, expressed by the venom gland.

It localises to the secreted. The protein is U-scoloptoxin(14)-Er1a of Ethmostigmus rubripes (Giant centipede).